The chain runs to 196 residues: Probable malonic semialdehyde reductase RutE (196 aa).

This sequence belongs to the nitroreductase family. HadB/RutE subfamily. The cofactor is FMN.

The enzyme catalyses 3-hydroxypropanoate + NADP(+) = 3-oxopropanoate + NADPH + H(+). In terms of biological role, may reduce toxic product malonic semialdehyde to 3-hydroxypropionic acid, which is excreted. This chain is Probable malonic semialdehyde reductase RutE, found in Escherichia coli O7:K1 (strain IAI39 / ExPEC).